The sequence spans 139 residues: Centromere protein S (139 aa).

Residues 99–139 are disordered; that stretch reads ELASSNMEQKEKKKKKSSAAKGRKTEENETPVTESEDSNMA. A compositionally biased stretch (basic residues) spans 110-120; it reads KKKKKSSAAKG.

It belongs to the TAF9 family. CENP-S/MHF1 subfamily. In terms of assembly, heterodimer with CENPX, sometimes called MHF; this interaction stabilizes both partners. MHF heterodimers can assemble to form tetrameric structures. MHF also coassemble with CENPT-CENPW heterodimers at centromeres to form the tetrameric CENP-T-W-S-X complex. Forms a discrete complex with FANCM and CENPX, called FANCM-MHF; this interaction, probably mediated by direct binding between CENPS and FANCM, leads to synergistic activation of double-stranded DNA binding and strongly stimulates FANCM-mediated DNA remodeling. Recruited by FANCM to the Fanconi anemia (FA) core complex, which consists of CENPS, CENPX, FANCA, FANCB, FANCC, FANCE, FANCF, FANCG, FANCL, FANCM, FAAP24 and FAAP100. The FA core complex associates with Bloom syndrome (BLM) complex, which consists of at least BLM, DNA topoisomerase 3-alpha (TOP3A), RMI1/BLAP75, RPA1/RPA70 and RPA2/RPA32. The super complex between FA and BLM is called BRAFT. Component of the CENPA-CAD complex, composed of CENPI, CENPK, CENPL, CENPO, CENPP, CENPQ, CENPR and CENPS. The CENPA-CAD complex is probably recruited on centromeres by the CENPA-NAC complex, at least composed of CENPA, CENPC, CENPH, CENPM, CENPN, CENPT and CENPU.

It localises to the nucleus. The protein resides in the chromosome. Its subcellular location is the centromere. The protein localises to the kinetochore. Functionally, DNA-binding component of the Fanconi anemia (FA) core complex. Required for the normal activation of the FA pathway, leading to monoubiquitination of the FANCI-FANCD2 complex in response to DNA damage, cellular resistance to DNA cross-linking drugs, and prevention of chromosomal breakage. In complex with CENPX (MHF heterodimer), crucial cofactor for FANCM in both binding and ATP-dependent remodeling of DNA. Stabilizes FANCM. In complex with CENPX and FANCM (but not other FANC proteins), rapidly recruited to blocked forks and promotes gene conversion at blocked replication forks. In complex with CENPT, CENPW and CENPX (CENP-T-W-S-X heterotetramer), involved in the formation of a functional kinetochore outer plate, which is essential for kinetochore-microtubule attachment and faithful mitotic progression. As a component of MHF and CENP-T-W-S-X complexes, binds DNA and bends it to form a nucleosome-like structure. DNA-binding function is fulfilled in the presence of CENPX, with the following preference for DNA substates: Holliday junction &gt; double-stranded &gt; splay arm &gt; single-stranded. Does not bind DNA on its own. This is Centromere protein S (CENPS) from Gallus gallus (Chicken).